The chain runs to 117 residues: Ig heavy chain V region 23 (117 aa).

The signal sequence occupies residues 1–19 (MGWSCIILFLVAAANGVHS). The framework-1 stretch occupies residues 20-49 (QVQLQQPGTELVKPGASVKLSCKASGYTFT). A disulfide bridge links C41 with C115. The segment at 50 to 54 (SYWMH) is complementarity-determining-1. Residues 55-68 (WVKQRPGQGLEWIG) are framework-2. Residues 69–85 (NINPGNGGTNYNEKFKS) are complementarity-determining-2. The interval 86–117 (KVTLTVDKSSSTAYTQLSSLTSEDSAVYYCAR) is framework-3.

This chain is Ig heavy chain V region 23, found in Mus musculus (Mouse).